We begin with the raw amino-acid sequence, 429 residues long: Histidine--tRNA ligase (429 aa).

It belongs to the class-II aminoacyl-tRNA synthetase family. In terms of assembly, homodimer.

It is found in the cytoplasm. The enzyme catalyses tRNA(His) + L-histidine + ATP = L-histidyl-tRNA(His) + AMP + diphosphate + H(+). This chain is Histidine--tRNA ligase, found in Pseudomonas putida (strain GB-1).